A 100-amino-acid chain; its full sequence is NAD(P)H-quinone oxidoreductase subunit 4L, chloroplastic (100 aa).

Helical transmembrane passes span 1–21 (MLENSLILGAYLFCLGIYGLT), 30–50 (LMCLELMLNGVNINLVAFSSF), and 60–80 (VFAIFIIAIAAAEAAIGLAII).

This sequence belongs to the complex I subunit 4L family. In terms of assembly, NDH is composed of at least 16 different subunits, 5 of which are encoded in the nucleus.

Its subcellular location is the plastid. The protein localises to the chloroplast thylakoid membrane. The enzyme catalyses a plastoquinone + NADH + (n+1) H(+)(in) = a plastoquinol + NAD(+) + n H(+)(out). It carries out the reaction a plastoquinone + NADPH + (n+1) H(+)(in) = a plastoquinol + NADP(+) + n H(+)(out). In terms of biological role, NDH shuttles electrons from NAD(P)H:plastoquinone, via FMN and iron-sulfur (Fe-S) centers, to quinones in the photosynthetic chain and possibly in a chloroplast respiratory chain. The immediate electron acceptor for the enzyme in this species is believed to be plastoquinone. Couples the redox reaction to proton translocation, and thus conserves the redox energy in a proton gradient. The polypeptide is NAD(P)H-quinone oxidoreductase subunit 4L, chloroplastic (Staurastrum punctulatum (Green alga)).